A 2462-amino-acid chain; its full sequence is Piezo-type mechanosensitive ion channel homolog (2462 aa).

The next 19 membrane-spanning stretches (helical) occupy residues 5 to 25 (LVGF…WSVI), 27 to 47 (FLDL…GYRF), 57 to 77 (IFIF…IWAA), 105 to 125 (TVMY…ADIY), 163 to 183 (AVQL…FFIG), 207 to 227 (LYIY…PINF), 248 to 268 (EGPD…LSYV), 325 to 345 (FFTY…FHFA), 347 to 367 (LCAF…PSLF), 374 to 394 (GLLL…NVAF), 404 to 424 (FGLG…FLYL), 467 to 487 (LIFL…IFFL), 502 to 522 (SLIL…IDLV), 554 to 574 (IALL…LFSF), 653 to 673 (VYLV…LLWI), 694 to 714 (AVLV…QLWL), 730 to 750 (APLL…QLYS), 792 to 812 (FYAS…GLVI), and 826 to 846 (SFLI…LWGM). Residues 927–947 (ASVSSSNGENPSSTDHASISM) are disordered. Positions 928–939 (SVSSSNGENPSS) are enriched in low complexity. A run of 8 helical transmembrane segments spans residues 1027–1047 (FWIE…ALLL), 1050–1070 (FALL…CVLL), 1078–1098 (LWPV…VATW), 1143–1160 (TLIS…KLRA), 1204–1224 (LYCY…TGTL), 1228–1248 (ILHL…LEIL), 1260–1280 (VYNF…VGNF), and 1310–1330 (SALV…MFSS). The stretch at 1347 to 1400 (AIVREQEKKAARKTEQLQQIREAEEKKRQRNLQVEKMKSEMLNLRVQLHRMNSD) forms a coiled coil. Positions 1543–1583 (SDTNEQSSVDDEVYDEMESQKRKHTPFERSTSLQSDRSSDG) are disordered. The segment covering 1550 to 1559 (SVDDEVYDEM) has biased composition (acidic residues). Positions 1570-1583 (ERSTSLQSDRSSDG) are enriched in polar residues. The next 8 membrane-spanning stretches (helical) occupy residues 1611 to 1631 (FIIA…AALF), 1647 to 1667 (VIML…QIII), 1916 to 1936 (YIFG…QSVI), 1956 to 1976 (FVII…IYLC), 1984 to 2004 (VYYL…AWSI), 2012 to 2032 (AGLA…LQAI), 2130 to 2150 (GICL…MYSS), and 2369 to 2389 (FLGD…FVLA).

Belongs to the PIEZO (TC 1.A.75) family.

It localises to the membrane. Pore-forming subunit of a mechanosensitive non-specific cation channel, that conducts both sodium and potassium ions. This chain is Piezo-type mechanosensitive ion channel homolog, found in Arabidopsis thaliana (Mouse-ear cress).